We begin with the raw amino-acid sequence, 268 residues long: Undecaprenyl-diphosphatase (268 aa).

A run of 8 helical transmembrane segments spans residues 3-23 (FFNLLEAAFLGLIEGLTEFIP), 46-66 (FEVLIQLGAILAILSVYSAKL), 84-104 (LGVLVAFLPAAVIGALAHGFI), 107-127 (VLFETPMLVCIMLIVGGFILL), 144-164 (YPLPICLAIGFIQCLAMIPGV), 185-205 (AEFSFFLAMPTMAGAFAYDLF), 213-233 (FNDGALIVVGFIMAFISGVFV), and 246-266 (FALFGWWRLIVGSAGMAALII).

Belongs to the UppP family.

The protein resides in the cell inner membrane. It catalyses the reaction di-trans,octa-cis-undecaprenyl diphosphate + H2O = di-trans,octa-cis-undecaprenyl phosphate + phosphate + H(+). Catalyzes the dephosphorylation of undecaprenyl diphosphate (UPP). Confers resistance to bacitracin. This is Undecaprenyl-diphosphatase from Brucella abortus (strain S19).